The following is a 163-amino-acid chain: NADH-quinone oxidoreductase subunit I (163 aa).

4Fe-4S ferredoxin-type domains lie at 53-83 and 94-123; these read LRRY…IEAG and VRYD…EGPN. [4Fe-4S] cluster-binding residues include Cys-63, Cys-66, Cys-69, Cys-73, Cys-103, Cys-106, Cys-109, and Cys-113.

This sequence belongs to the complex I 23 kDa subunit family. As to quaternary structure, NDH-1 is composed of 14 different subunits. Subunits NuoA, H, J, K, L, M, N constitute the membrane sector of the complex. It depends on [4Fe-4S] cluster as a cofactor.

It is found in the cell inner membrane. The catalysed reaction is a quinone + NADH + 5 H(+)(in) = a quinol + NAD(+) + 4 H(+)(out). In terms of biological role, NDH-1 shuttles electrons from NADH, via FMN and iron-sulfur (Fe-S) centers, to quinones in the respiratory chain. The immediate electron acceptor for the enzyme in this species is believed to be ubiquinone. Couples the redox reaction to proton translocation (for every two electrons transferred, four hydrogen ions are translocated across the cytoplasmic membrane), and thus conserves the redox energy in a proton gradient. The protein is NADH-quinone oxidoreductase subunit I of Brucella suis (strain ATCC 23445 / NCTC 10510).